Consider the following 316-residue polypeptide: ATP synthase gamma chain (316 aa).

It belongs to the ATPase gamma chain family. In terms of assembly, F-type ATPases have 2 components, CF(1) - the catalytic core - and CF(0) - the membrane proton channel. CF(1) has five subunits: alpha(3), beta(3), gamma(1), delta(1), epsilon(1). CF(0) has three main subunits: a, b and c.

The protein resides in the cellular thylakoid membrane. In terms of biological role, produces ATP from ADP in the presence of a proton gradient across the membrane. The gamma chain is believed to be important in regulating ATPase activity and the flow of protons through the CF(0) complex. This Prochlorococcus marinus (strain MIT 9215) protein is ATP synthase gamma chain.